The primary structure comprises 582 residues: Vesicular glutamate transporter 2 (582 aa).

Residues 1 to 71 are Cytoplasmic-facing; the sequence is MESVKQRILA…CTCFGLPRRY (71 aa). A helical membrane pass occupies residues 72 to 92; sequence IIAIMSGLGFCISFGIRCNLG. Residues 93–125 are Vesicular-facing; it reads VAIVDMVNNSTIHRGGKVIKEKAKFNWDPETVG. 2 N-linked (GlcNAc...) asparagine glycosylation sites follow: N100 and N101. A helical membrane pass occupies residues 126–146; the sequence is MIHGSFFWGYIITQIPGGYIA. Residues 147-148 lie on the Cytoplasmic side of the membrane; sequence SR. A helical transmembrane segment spans residues 149 to 169; the sequence is LAANRVFGAAILLTSTLNMLI. Residues 170 to 177 are Vesicular-facing; the sequence is PSAARVHY. A helical transmembrane segment spans residues 178–198; sequence GCVIFVRILQGLVEGVTYPAC. Over 199–216 the chain is Cytoplasmic; the sequence is HGIWSKWAPPLERSRLAT. A helical membrane pass occupies residues 217–237; the sequence is TSFCGSYAGAVIAMPLAGILV. The Vesicular segment spans residues 238–244; that stretch reads QYTGWSS. A helical transmembrane segment spans residues 245–265; sequence VFYVYGSFGMVWYMFWLLVSY. The Cytoplasmic segment spans residues 266 to 310; that stretch reads ESPAKHPTITDEERRYIEESIGESANLLGAMEKFKTPWRKFFTSM. The helical transmembrane segment at 311–331 threads the bilayer; sequence PVYAIIVANFCRSWTFYLLLI. At 332–349 the chain is on the vesicular side; sequence SQPAYFEEVFGFEISKVG. The chain crosses the membrane as a helical span at residues 350 to 370; the sequence is MLSAVPHLVMTIIVPIGGQIA. At 371-386 the chain is on the cytoplasmic side; sequence DFLRSKQILSTTTVRK. A helical membrane pass occupies residues 387–407; sequence IMNCGGFGMEATLLLVVGYSH. Residues 408–409 lie on the Vesicular side of the membrane; sequence TR. A helical transmembrane segment spans residues 410-430; the sequence is GVAISFLVLAVGFSGFAISGF. Residues 431–443 are Cytoplasmic-facing; it reads NVNHLDIAPRYAS. The chain crosses the membrane as a helical span at residues 444-464; it reads ILMGISNGVGTLSGMVCPIIV. Over 465 to 477 the chain is Vesicular; it reads GAMTKNKSREEWQ. A glycan (N-linked (GlcNAc...) asparagine) is linked at N470. The helical transmembrane segment at 478–498 threads the bilayer; the sequence is YVFLIAALVHYGGVIFYAIFA. Residues 499 to 582 lie on the Cytoplasmic side of the membrane; it reads SGEKQPWADP…HSYKDRVDYS (84 aa).

The protein belongs to the major facilitator superfamily. Sodium/anion cotransporter family. VGLUT subfamily. In terms of tissue distribution, predominantly expressed in adult brain. Expressed in amygdala, caudate nucleus, cerebral cortex, frontal lobe, hippocampus, medulla, occipital lobe, putamen, spinal cord, substantia nigra, subthalamic nucleus, temporal lobe and thalamus.

It localises to the cytoplasmic vesicle. It is found in the secretory vesicle. Its subcellular location is the synaptic vesicle membrane. The protein resides in the synapse. The protein localises to the synaptosome. It localises to the cell membrane. It catalyses the reaction L-glutamate(out) = L-glutamate(in). The enzyme catalyses 3 Na(+)(out) + phosphate(out) = 3 Na(+)(in) + phosphate(in). It carries out the reaction phosphate(in) = phosphate(out). The catalysed reaction is K(+)(in) + H(+)(out) = K(+)(out) + H(+)(in). It catalyses the reaction chloride(in) = chloride(out). Its activity is regulated as follows. Chloride channel activity is allosterically activated by lumenal H(+) and Cl(-) leading to synaptic vesicles acidification. The L-glutamate transport activity is allosterically activated by lumenal H(+) and Cl(-). The allosteric requirement for H(+) efficiently prevents non-vesicular efflux across the plasma membrane. The L-glutamate uniporter activity exhibits a biphasic dependence on chloride concentration. Its function is as follows. Multifunctional transporter that transports L-glutamate as well as multiple ions such as chloride, proton, potassium, sodium and phosphate. At the synaptic vesicle membrane, mainly functions as a uniporter which transports preferentially L-glutamate but also, phosphate from the cytoplasm into synaptic vesicles at presynaptic nerve terminals of excitatory neural cells. The L-glutamate or phosphate uniporter activity is electrogenic and is driven by the proton electrochemical gradient, mainly by the electrical gradient established by the vacuolar H(+)-ATPase across the synaptic vesicle membrane. In addition, functions as a chloride channel that allows the chloride permeation through the synaptic vesicle membrane therefore affects the proton electrochemical gradient and promotes synaptic vesicles acidification. Moreover, functions as a vesicular K(+)/H(+) antiport allowing to maintain the electrical gradient and to decrease chemical gradient and therefore sustain vesicular glutamate uptake. The vesicular H(+)/H(+) antiport activity is electroneutral. At the plasma membrane, following exocytosis, functions as a symporter of Na(+) and phosphate from the extracellular space to the cytoplasm allowing synaptic phosphate homeostasis regulation. The symporter activity is driven by an inside negative membrane potential and is electrogenic. Also involved in the regulation of retinal hyaloid vessel regression during postnatal development. May also play a role in the endocrine glutamatergic system of other tissues such as pineal gland and pancreas. This chain is Vesicular glutamate transporter 2, found in Homo sapiens (Human).